The following is a 467-amino-acid chain: Dihydrolipoyl dehydrogenase 3 (467 aa).

Residues 34–43 (EGRETLGGTC), Lys-52, and Ala-116 each bind FAD. Residues Cys-43 and Cys-48 are joined by a disulfide bond. Residues 182–186 (GAGVI), Glu-205, Val-239, and 272–275 (AIGR) each bind NAD(+). Residues Asp-314 and Ala-322 each coordinate FAD. His-446 acts as the Proton acceptor in catalysis.

Belongs to the class-I pyridine nucleotide-disulfide oxidoreductase family. In terms of assembly, homodimer. It depends on FAD as a cofactor.

It localises to the cytoplasm. It carries out the reaction N(6)-[(R)-dihydrolipoyl]-L-lysyl-[protein] + NAD(+) = N(6)-[(R)-lipoyl]-L-lysyl-[protein] + NADH + H(+). Its function is as follows. LPD-3 may substitute for lipoamide dehydrogenase of the 2-oxoglutarate dehydrogenase and pyruvate multienzyme complexes when the latter is inactive or missing. In Pseudomonas aeruginosa (strain ATCC 15692 / DSM 22644 / CIP 104116 / JCM 14847 / LMG 12228 / 1C / PRS 101 / PAO1), this protein is Dihydrolipoyl dehydrogenase 3 (lpd3).